The chain runs to 176 residues: Peptide deformylase 1 (176 aa).

C99 and H141 together coordinate Fe cation. Residue E142 is part of the active site. Residue H145 coordinates Fe cation.

Belongs to the polypeptide deformylase family. The cofactor is Fe(2+).

The catalysed reaction is N-terminal N-formyl-L-methionyl-[peptide] + H2O = N-terminal L-methionyl-[peptide] + formate. Functionally, removes the formyl group from the N-terminal Met of newly synthesized proteins. Requires at least a dipeptide for an efficient rate of reaction. N-terminal L-methionine is a prerequisite for activity but the enzyme has broad specificity at other positions. The chain is Peptide deformylase 1 from Bordetella pertussis (strain Tohama I / ATCC BAA-589 / NCTC 13251).